A 479-amino-acid chain; its full sequence is Phosphoglycerate kinase, glycosomal (479 aa).

Positions 23, 24, 25, 26, 39, 61, 62, 64, 65, 132, 168, and 169 each coordinate (2R)-3-phosphoglycerate. ADP is bound by residues Gly-214 and Ala-215. Gly-214 serves as a coordination point for CDP. Ala-215 and Lys-216 together coordinate AMP. Ala-215 serves as a coordination point for ATP. Ala-215 serves as a coordination point for Mg(2+). Lys-216 contacts (2R)-3-phosphoglycerate. CDP is bound at residue Asp-219. Asp-219 lines the Mg(2+) pocket. ADP-binding residues include Lys-220 and Gly-238. Position 220 (Lys-220) interacts with AMP. Lys-220 contacts ATP. Position 238 (Gly-238) interacts with CDP. 2 residues coordinate AMP: Ala-239 and Ala-311. Ala-239 and Ala-311 together coordinate ATP. Residues Ala-311 and Asn-335 each contribute to the ADP site. Residues Gly-336 and Phe-341 each coordinate CDP. ADP contacts are provided by Phe-341, Glu-342, Asp-374, and Thr-375. An AMP-binding site is contributed by Glu-342. Residues Glu-342, Asp-374, and Thr-375 each contribute to the ATP site. A Mg(2+)-binding site is contributed by Asp-374.

Belongs to the phosphoglycerate kinase family. In terms of assembly, monomer. Mg(2+) serves as cofactor.

Its subcellular location is the glycosome. The enzyme catalyses (2R)-3-phosphoglycerate + ATP = (2R)-3-phospho-glyceroyl phosphate + ADP. It functions in the pathway carbohydrate degradation; glycolysis; pyruvate from D-glyceraldehyde 3-phosphate: step 2/5. The sequence is that of Phosphoglycerate kinase, glycosomal (PGKC) from Leishmania mexicana.